Reading from the N-terminus, the 261-residue chain is Cytochrome c oxidase subunit 3 (261 aa).

Over 1-15 the chain is Mitochondrial matrix; that stretch reads MTHQTHAYHMVNPSP. The chain crosses the membrane as a helical span at residues 16-34; it reads WPLTGALSALLMTSGLIMW. The Mitochondrial intermembrane portion of the chain corresponds to 35-40; that stretch reads FHYNSM. A helical transmembrane segment spans residues 41 to 66; it reads SLLTLGFTTNLLTMYQWWRDVIREGT. Over 67–72 the chain is Mitochondrial matrix; that stretch reads FQGHHT. A helical transmembrane segment spans residues 73-105; it reads PIVQKGLRYGMVLFIVSEVFFFAGFFWAFYHSS. Over 106–128 the chain is Mitochondrial intermembrane; sequence LAPTPELGGCWPPTGIIPLNPLE. The helical transmembrane segment at 129–152 threads the bilayer; the sequence is VPLLNTSVLLASGVSITWAHHSLM. Residues 153–155 are Mitochondrial matrix-facing; sequence EGN. A helical membrane pass occupies residues 156 to 183; that stretch reads RKHMLQALFITISLGVYFTLLQASEYYE. Over 184–190 the chain is Mitochondrial intermembrane; it reads TSFTISD. Residues 191–223 traverse the membrane as a helical segment; sequence GVYGSTFFMATGFHGLHVIIGSTFLIVCFLRQL. At 224 to 232 the chain is on the mitochondrial matrix side; it reads YYHFTSNHH. The helical transmembrane segment at 233–256 threads the bilayer; it reads FGFEAAAWYWHFVDVVWLFLYVSI. Over 257–261 the chain is Mitochondrial intermembrane; that stretch reads YWWGS.

It belongs to the cytochrome c oxidase subunit 3 family. In terms of assembly, component of the cytochrome c oxidase (complex IV, CIV), a multisubunit enzyme composed of 14 subunits. The complex is composed of a catalytic core of 3 subunits MT-CO1, MT-CO2 and MT-CO3, encoded in the mitochondrial DNA, and 11 supernumerary subunits COX4I, COX5A, COX5B, COX6A, COX6B, COX6C, COX7A, COX7B, COX7C, COX8 and NDUFA4, which are encoded in the nuclear genome. The complex exists as a monomer or a dimer and forms supercomplexes (SCs) in the inner mitochondrial membrane with NADH-ubiquinone oxidoreductase (complex I, CI) and ubiquinol-cytochrome c oxidoreductase (cytochrome b-c1 complex, complex III, CIII), resulting in different assemblies (supercomplex SCI(1)III(2)IV(1) and megacomplex MCI(2)III(2)IV(2)).

It localises to the mitochondrion inner membrane. It carries out the reaction 4 Fe(II)-[cytochrome c] + O2 + 8 H(+)(in) = 4 Fe(III)-[cytochrome c] + 2 H2O + 4 H(+)(out). Its function is as follows. Component of the cytochrome c oxidase, the last enzyme in the mitochondrial electron transport chain which drives oxidative phosphorylation. The respiratory chain contains 3 multisubunit complexes succinate dehydrogenase (complex II, CII), ubiquinol-cytochrome c oxidoreductase (cytochrome b-c1 complex, complex III, CIII) and cytochrome c oxidase (complex IV, CIV), that cooperate to transfer electrons derived from NADH and succinate to molecular oxygen, creating an electrochemical gradient over the inner membrane that drives transmembrane transport and the ATP synthase. Cytochrome c oxidase is the component of the respiratory chain that catalyzes the reduction of oxygen to water. Electrons originating from reduced cytochrome c in the intermembrane space (IMS) are transferred via the dinuclear copper A center (CU(A)) of subunit 2 and heme A of subunit 1 to the active site in subunit 1, a binuclear center (BNC) formed by heme A3 and copper B (CU(B)). The BNC reduces molecular oxygen to 2 water molecules using 4 electrons from cytochrome c in the IMS and 4 protons from the mitochondrial matrix. The chain is Cytochrome c oxidase subunit 3 (MT-CO3) from Canis lupus (Gray wolf).